Here is a 522-residue protein sequence, read N- to C-terminus: Protein nucleotidyltransferase YdiU (522 aa).

Residues Gly109, Gly111, Arg112, Lys132, Asp144, Gly145, Arg195, and Arg202 each coordinate ATP. Asp271 serves as the catalytic Proton acceptor. Residues Asn272 and Asp281 each coordinate Mg(2+). Asp281 contributes to the ATP binding site.

Belongs to the SELO family. Mg(2+) is required as a cofactor. Requires Mn(2+) as cofactor.

It catalyses the reaction L-seryl-[protein] + ATP = 3-O-(5'-adenylyl)-L-seryl-[protein] + diphosphate. The catalysed reaction is L-threonyl-[protein] + ATP = 3-O-(5'-adenylyl)-L-threonyl-[protein] + diphosphate. It carries out the reaction L-tyrosyl-[protein] + ATP = O-(5'-adenylyl)-L-tyrosyl-[protein] + diphosphate. The enzyme catalyses L-histidyl-[protein] + UTP = N(tele)-(5'-uridylyl)-L-histidyl-[protein] + diphosphate. It catalyses the reaction L-seryl-[protein] + UTP = O-(5'-uridylyl)-L-seryl-[protein] + diphosphate. The catalysed reaction is L-tyrosyl-[protein] + UTP = O-(5'-uridylyl)-L-tyrosyl-[protein] + diphosphate. Nucleotidyltransferase involved in the post-translational modification of proteins. It can catalyze the addition of adenosine monophosphate (AMP) or uridine monophosphate (UMP) to a protein, resulting in modifications known as AMPylation and UMPylation. This is Protein nucleotidyltransferase YdiU from Burkholderia multivorans (strain ATCC 17616 / 249).